The sequence spans 87 residues: Phosphoribosyl-ATP pyrophosphatase (87 aa).

It belongs to the PRA-PH family.

It localises to the cytoplasm. It catalyses the reaction 1-(5-phospho-beta-D-ribosyl)-ATP + H2O = 1-(5-phospho-beta-D-ribosyl)-5'-AMP + diphosphate + H(+). It functions in the pathway amino-acid biosynthesis; L-histidine biosynthesis; L-histidine from 5-phospho-alpha-D-ribose 1-diphosphate: step 2/9. This chain is Phosphoribosyl-ATP pyrophosphatase, found in Salinibacter ruber (strain DSM 13855 / M31).